The following is a 155-amino-acid chain: MAPKAEKKPAAKKPAEEEPAAEKAEKAPAGKKPKAEKRLPAGKGEKGSGEGKKDRAGRKKAKKSVETYKIYIFKVLKQVHPDIGISSKAMSIMNSFINDIFEKLAAEAAKLARYNKKPTITSREIQTSVRLVLPGELAKHAVSEGTKAVTKFTSA.

Basic and acidic residues-rich tracts occupy residues 1 to 28 (MAPK…EKAP) and 36 to 54 (EKRL…GKKD). A disordered region spans residues 1-63 (MAPKAEKKPA…DRAGRKKAKK (63 aa)). K7 and K37 each carry N6-acetyllysine. K151 is covalently cross-linked (Glycyl lysine isopeptide (Lys-Gly) (interchain with G-Cter in ubiquitin)).

Belongs to the histone H2B family. The nucleosome is a histone octamer containing two molecules each of H2A, H2B, H3 and H4 assembled in one H3-H4 heterotetramer and two H2A-H2B heterodimers. The octamer wraps approximately 147 bp of DNA. In terms of processing, can be acetylated to form H2BK6ac and H2BK33ac. Monoubiquitinated by BRE1 to form H2BK143ub1 and deubiquitinated by UBP26. Required for heterochromatic histone H3 di- and trimethylation at H3K4me. May give a specific tag for epigenetic transcriptional activation.

It is found in the nucleus. It localises to the chromosome. In terms of biological role, core component of nucleosome. Nucleosomes wrap and compact DNA into chromatin, limiting DNA accessibility to the cellular machineries which require DNA as a template. Histones thereby play a central role in transcription regulation, DNA repair, DNA replication and chromosomal stability. DNA accessibility is regulated via a complex set of post-translational modifications of histones, also called histone code, and nucleosome remodeling. In Oryza sativa subsp. japonica (Rice), this protein is Histone H2B.5 (H2B.5).